We begin with the raw amino-acid sequence, 677 residues long: Methionine--tRNA ligase (677 aa).

Positions 15–25 (PYANGSIHLGH) match the 'HIGH' region motif. Residues Cys146, Cys149, Cys159, and Cys162 each contribute to the Zn(2+) site. The short motif at 333 to 337 (KMSKS) is the 'KMSKS' region element. Lys336 provides a ligand contact to ATP. In terms of domain architecture, tRNA-binding spans 575–677 (DFAKVDLRVA…AGAKPGHQVK (103 aa)).

The protein belongs to the class-I aminoacyl-tRNA synthetase family. MetG type 1 subfamily. In terms of assembly, homodimer. Zn(2+) is required as a cofactor.

The protein resides in the cytoplasm. The catalysed reaction is tRNA(Met) + L-methionine + ATP = L-methionyl-tRNA(Met) + AMP + diphosphate. In terms of biological role, is required not only for elongation of protein synthesis but also for the initiation of all mRNA translation through initiator tRNA(fMet) aminoacylation. The sequence is that of Methionine--tRNA ligase from Escherichia coli (strain SE11).